Here is a 521-residue protein sequence, read N- to C-terminus: Vang-like protein 2-B (521 aa).

Residues 1 to 18 (MDNDSQYSGYSYKSGQSR) are compositionally biased toward low complexity. The disordered stretch occupies residues 1–73 (MDNDSQYSGY…RDDNWGETTT (73 aa)). Topologically, residues 1–108 (MDNDSQYSGY…AKLDCSRHLG (108 aa)) are cytoplasmic. Basic residues predominate over residues 19 to 33 (SSRKHRDRRERHRSK). The span at 57 to 67 (ESTRGEDRDDN) shows a compositional bias: basic and acidic residues. Residues 109–129 (VVIAGALALLSFLTPIAFMLL) traverse the membrane as a helical segment. Residues 130–147 (PQILWREDLEQCGTACEG) are Extracellular-facing. The helical transmembrane segment at 148–168 (LFISVAFKLLILLLGSWALFF) threads the bilayer. Residues 169–178 (RRPKAFFPRV) lie on the Cytoplasmic side of the membrane. The chain crosses the membrane as a helical span at residues 179-199 (FVFRALLMVLVFLLVVSYWLF). Over 200-218 (YGVRILESRDKNYQGIVQY) the chain is Extracellular. A helical membrane pass occupies residues 219–239 (AVSLVDALLFVHYLAVVLLEL). Residues 240–521 (RQLQPQFTIK…VMRLQSETSV (282 aa)) lie on the Cytoplasmic side of the membrane. Residues 518–521 (ETSV) carry the PDZ-binding motif.

It belongs to the Vang family. Interacts with dvl/dsh. Interacts with prickle3. As to expression, during gastrulation, broadly expressed in the dorsal region in both mesodermal and neural tissues. From the neurula stages, expressed throughout the neural tube. In tailbud stages, expression declines in the anterior notochord but remains strong in the posterior notochord and in the neural tube. Also weakly expressed in the prenephritic region of late tailbud embryos.

Its subcellular location is the cell membrane. In terms of biological role, has a role in non-canonical Wnt/planar cell polarity (PCP) signaling; can recruit dvl/dsh and prickle from the cytoplasm to the plasma membrane. Acts in a PCP complex to regulate the polarized assembly of fibronectrin on the surface of the mesoderm during gastrulation. Regulates convergent extension in both dorsal mesoderm and neural tissue without affecting cell fate. Regulates neural fold closure during neurulation. May be required for cell surface localization of fzd3 and fzd6 in the inner ear. The sequence is that of Vang-like protein 2-B (vangl2-b) from Xenopus laevis (African clawed frog).